The primary structure comprises 310 residues: Putative S-adenosyl-L-methionine-dependent methyltransferase MMAR_3534 (310 aa).

Residues aspartate 131 and 160 to 161 (DL) each bind S-adenosyl-L-methionine.

This sequence belongs to the UPF0677 family.

Exhibits S-adenosyl-L-methionine-dependent methyltransferase activity. This chain is Putative S-adenosyl-L-methionine-dependent methyltransferase MMAR_3534, found in Mycobacterium marinum (strain ATCC BAA-535 / M).